We begin with the raw amino-acid sequence, 92 residues long: Ictacalcin (92 aa).

2 EF-hand domains span residues 12-47 and 49-84; these read ISTF…AFGN and SDQA…TTML. Residues Thr27, Glu32, Asp62, Asn64, Asp66, and Glu73 each coordinate Ca(2+).

This sequence belongs to the S-100 family. As to expression, abundant in epithelial cells of olfactory rosette, barbel, skin and gill but not brain or muscle.

Plays an important role in catfish calcium homeostasis. This is Ictacalcin from Ictalurus punctatus (Channel catfish).